We begin with the raw amino-acid sequence, 354 residues long: Ribosomal RNA large subunit methyltransferase M (354 aa).

S-adenosyl-L-methionine is bound by residues S183, 216 to 219, D235, D255, and D271; that span reads SPGG. The active-site Proton acceptor is the K300.

This sequence belongs to the class I-like SAM-binding methyltransferase superfamily. RNA methyltransferase RlmE family. RlmM subfamily. In terms of assembly, monomer.

Its subcellular location is the cytoplasm. It catalyses the reaction cytidine(2498) in 23S rRNA + S-adenosyl-L-methionine = 2'-O-methylcytidine(2498) in 23S rRNA + S-adenosyl-L-homocysteine + H(+). Functionally, catalyzes the 2'-O-methylation at nucleotide C2498 in 23S rRNA. The polypeptide is Ribosomal RNA large subunit methyltransferase M (Pseudomonas entomophila (strain L48)).